Consider the following 210-residue polypeptide: Dephospho-CoA kinase (210 aa).

Positions 18 to 210 constitute a DPCK domain; it reads RIGITGGIAS…LSYPQVEVLL (193 aa). Position 26–31 (26–31) interacts with ATP; it reads ASGKTS.

Belongs to the CoaE family.

It is found in the cytoplasm. It catalyses the reaction 3'-dephospho-CoA + ATP = ADP + CoA + H(+). It participates in cofactor biosynthesis; coenzyme A biosynthesis; CoA from (R)-pantothenate: step 5/5. Catalyzes the phosphorylation of the 3'-hydroxyl group of dephosphocoenzyme A to form coenzyme A. The chain is Dephospho-CoA kinase from Prochlorococcus marinus (strain SARG / CCMP1375 / SS120).